The sequence spans 570 residues: Periplasmic trehalase (570 aa).

Residues Met1–Ala34 form the signal peptide. Substrate is bound by residues Arg159, Trp166–Asp167, Asn203, Arg212–Gln214, Arg284–Glu286, and Gly317. Catalysis depends on proton donor/acceptor residues Asp319 and Glu503. Substrate is bound at residue Glu518. The segment at Lys544 to Gln570 is disordered. Residues Pro554–Gln570 show a composition bias toward low complexity.

It belongs to the glycosyl hydrolase 37 family. In terms of assembly, monomer.

The protein localises to the periplasm. The catalysed reaction is alpha,alpha-trehalose + H2O = alpha-D-glucose + beta-D-glucose. Its function is as follows. Provides the cells with the ability to utilize trehalose at high osmolarity by splitting it into glucose molecules that can subsequently be taken up by the phosphotransferase-mediated uptake system. This chain is Periplasmic trehalase, found in Salmonella choleraesuis (strain SC-B67).